The primary structure comprises 496 residues: Chromosomal replication initiator protein DnaA (496 aa).

A domain I, interacts with DnaA modulators region spans residues 1-76; it reads MKMDSAVSEE…TELWQEENPQ (76 aa). The segment at 76-150 is domain II; the sequence is QILKVEVVVR…AAATGAVLGS (75 aa). A domain III, AAA+ region region spans residues 151-373; that stretch reads PLDPRYTFDT…GAFNQLLFRQ (223 aa). ATP-binding residues include G197, G199, K200, and T201. The tract at residues 374-496 is domain IV, binds dsDNA; sequence SFEPNISIDR…LKRLINDQAA (123 aa).

Belongs to the DnaA family. As to quaternary structure, oligomerizes as a right-handed, spiral filament on DNA at oriC.

The protein resides in the cytoplasm. Functionally, plays an essential role in the initiation and regulation of chromosomal replication. ATP-DnaA binds to the origin of replication (oriC) to initiate formation of the DNA replication initiation complex once per cell cycle. Binds the DnaA box (a 9 base pair repeat at the origin) and separates the double-stranded (ds)DNA. Forms a right-handed helical filament on oriC DNA; dsDNA binds to the exterior of the filament while single-stranded (ss)DNA is stabiized in the filament's interior. The ATP-DnaA-oriC complex binds and stabilizes one strand of the AT-rich DNA unwinding element (DUE), permitting loading of DNA polymerase. After initiation quickly degrades to an ADP-DnaA complex that is not apt for DNA replication. Binds acidic phospholipids. This is Chromosomal replication initiator protein DnaA from Brucella abortus biovar 1 (strain 9-941).